The chain runs to 236 residues: Large ribosomal subunit protein uL3 (236 aa).

A disordered region spans residues 215–236; sequence PAPEPAAPVAAAAAGTGEEASA. The span at 221-236 shows a compositional bias: low complexity; that stretch reads APVAAAAAGTGEEASA.

The protein belongs to the universal ribosomal protein uL3 family. Part of the 50S ribosomal subunit. Forms a cluster with proteins L14 and L19.

In terms of biological role, one of the primary rRNA binding proteins, it binds directly near the 3'-end of the 23S rRNA, where it nucleates assembly of the 50S subunit. The polypeptide is Large ribosomal subunit protein uL3 (Parafrankia sp. (strain EAN1pec)).